Reading from the N-terminus, the 484-residue chain is Cobyric acid synthase (484 aa).

The 190-residue stretch at 249-438 (QLRVAVPVFT…LHGIFDRPET (190 aa)) folds into the GATase cobBQ-type domain. The Nucleophile role is filled by C330. H430 is a catalytic residue.

It belongs to the CobB/CobQ family. CobQ subfamily.

It functions in the pathway cofactor biosynthesis; adenosylcobalamin biosynthesis. Catalyzes amidations at positions B, D, E, and G on adenosylcobyrinic A,C-diamide. NH(2) groups are provided by glutamine, and one molecule of ATP is hydrogenolyzed for each amidation. The sequence is that of Cobyric acid synthase from Vibrio cholerae serotype O1 (strain ATCC 39315 / El Tor Inaba N16961).